Reading from the N-terminus, the 205-residue chain is Cerebellin-3 (205 aa).

The signal sequence occupies residues 1–32; sequence MLGAKPHWLPGPLHSPGLPLVLVLLALGAGWA. The region spanning 67–205 is the C1q domain; it reads APPGRVAFAA…SFSGFLIFPL (139 aa). Positions 72–205 are necessary for interaction with CBLN3, and homotrimerization; it reads VAFAAVRSHH…SFSGFLIFPL (134 aa). Asn90 carries N-linked (GlcNAc...) asparagine glycosylation.

As to quaternary structure, heterohexamer; disulfide-linked heterotrimers. Interacts with CBLN1. May also form oligomers with CBLN2 and CBLN4.

It is found in the endoplasmic reticulum. The protein localises to the golgi apparatus. It localises to the cis-Golgi network. Its subcellular location is the secreted. The protein resides in the synapse. Its function is as follows. May be involved in synaptic functions in the CNS. The protein is Cerebellin-3 (CBLN3) of Homo sapiens (Human).